The following is a 212-amino-acid chain: GrpE protein homolog, mitochondrial (212 aa).

The protein belongs to the GrpE family. In terms of assembly, component of the PAM complex, at least composed of mtHsp70, MGE1, TIM44, PAM16, PAM17 and PAM18.

The protein resides in the mitochondrion matrix. Its function is as follows. Essential component of the PAM complex, a complex required for the translocation of transit peptide-containing proteins from the inner membrane into the mitochondrial matrix in an ATP-dependent manner. Seems to control the nucleotide-dependent binding of SSC1 to substrate proteins. This Eremothecium gossypii (strain ATCC 10895 / CBS 109.51 / FGSC 9923 / NRRL Y-1056) (Yeast) protein is GrpE protein homolog, mitochondrial (mge1).